The chain runs to 371 residues: DNA replication and repair protein RecF (371 aa).

30 to 37 (GPNAQGKT) contributes to the ATP binding site.

Belongs to the RecF family.

The protein resides in the cytoplasm. Functionally, the RecF protein is involved in DNA metabolism; it is required for DNA replication and normal SOS inducibility. RecF binds preferentially to single-stranded, linear DNA. It also seems to bind ATP. This is DNA replication and repair protein RecF from Desulforamulus reducens (strain ATCC BAA-1160 / DSM 100696 / MI-1) (Desulfotomaculum reducens).